We begin with the raw amino-acid sequence, 285 residues long: MPRYAQLVMGPAGSGKSTYCATMLEHCQALNRSVQVVNLDPAAEHFEYPVIADIRELIQVDDVMEDDSLRFGPNGGLIFCMEYFSNNFDWLEESLGHVEDDYILFDCPGQIELYTHLPVMKQLVEQLQQWEFRVCGVFLVDSQFMVETFKFISGVMAALSAMVMLEIPQVNIMTKMDLLSPKAKKEIEKYLDPDMYSMMEDNSVALRSKKFSKLTKAICGLIDDYSMVRFLPFDRTDEEGINIVLQHIDFSIQYGEDLEVKEPKEVDEEPSNSNFDAFFQDTADS.

13-18 (GSGKST) is a binding site for GTP. Positions 72–74 (GPN) match the Gly-Pro-Asn (GPN)-loop; involved in dimer interface motif. 174–177 (TKMD) provides a ligand contact to GTP. A disordered region spans residues 262–285 (EPKEVDEEPSNSNFDAFFQDTADS).

The protein belongs to the GPN-loop GTPase family. Heterodimer with gpn1. Binds to RNA polymerase II (RNAPII).

Functionally, small GTPase required for proper localization of RNA polymerase II (RNAPII). May act at an RNAP assembly step prior to nuclear import. The polypeptide is GPN-loop GTPase 3 (Danio rerio (Zebrafish)).